We begin with the raw amino-acid sequence, 419 residues long: S-adenosylmethionine synthase (419 aa).

Residue His15 participates in ATP binding. Asp17 lines the Mg(2+) pocket. K(+) is bound at residue Glu43. The L-methionine site is built by Glu56 and Gln100. The segment at 100-110 (QSPDIAQGVDE) is flexible loop. Residues 171–173 (DGK), 248–249 (KF), Asp257, 263–264 (RK), Ala280, and Lys284 contribute to the ATP site. Asp257 provides a ligand contact to L-methionine. Position 288 (Lys288) interacts with L-methionine.

It belongs to the AdoMet synthase family. Homotetramer; dimer of dimers. Mg(2+) serves as cofactor. It depends on K(+) as a cofactor.

The protein resides in the cytoplasm. The enzyme catalyses L-methionine + ATP + H2O = S-adenosyl-L-methionine + phosphate + diphosphate. Its pathway is amino-acid biosynthesis; S-adenosyl-L-methionine biosynthesis; S-adenosyl-L-methionine from L-methionine: step 1/1. Catalyzes the formation of S-adenosylmethionine (AdoMet) from methionine and ATP. The overall synthetic reaction is composed of two sequential steps, AdoMet formation and the subsequent tripolyphosphate hydrolysis which occurs prior to release of AdoMet from the enzyme. The chain is S-adenosylmethionine synthase from Synechococcus sp. (strain WH7803).